A 744-amino-acid polypeptide reads, in one-letter code: Glucosamine inositolphosphorylceramide transferase 1 (744 aa).

A run of 3 helical transmembrane segments spans residues 31-51 (FLVA…WLVV), 378-398 (SLFG…VGFV), and 460-480 (LFFC…VHFL). Substrate contacts are provided by residues Asn-534, 558–563 (NSLNNR), 579–581 (DDD), Arg-609, and 665–669 (FNCED). Mn(2+) is bound at residue Asp-581. Cys-667 and Cys-718 are joined by a disulfide. Asp-669 is a catalytic residue.

This sequence belongs to the glycosyltransferase 64 family. Mn(2+) is required as a cofactor.

It is found in the membrane. Its pathway is sphingolipid metabolism. In terms of biological role, essential protein. Glycosyltransferase that mediates the glycosylation of glycosylinositol phosphorylceramides (GIPCs), the major sphingolipids in the plasma membrane; acts as a HexN(Ac)-specific GIPC sugar transferase. Responsible for the glycosylation of a subgroup of GIPCs found in seeds and pollen that contain GlcNAc and GlcN (GlcN(Ac)). Maybe involved in the maintenance of cell-cell adhesion. The polypeptide is Glucosamine inositolphosphorylceramide transferase 1 (Oryza sativa subsp. indica (Rice)).